Here is a 123-residue protein sequence, read N- to C-terminus: Small ribosomal subunit protein uS12cz/uS12cy (123 aa).

Belongs to the universal ribosomal protein uS12 family. In terms of assembly, part of the 30S ribosomal subunit.

The protein localises to the plastid. It localises to the chloroplast. With S4 and S5 plays an important role in translational accuracy. Located at the interface of the 30S and 50S subunits. The protein is Small ribosomal subunit protein uS12cz/uS12cy (rps12-A) of Coffea arabica (Arabian coffee).